A 445-amino-acid polypeptide reads, in one-letter code: Canavalin (445 aa).

The signal sequence occupies residues 1 to 26 (MAFSARFPLWLLLGVVLLASVSASFA). 2 Cupin type-1 domains span residues 49 to 207 (YLFR…DEIE) and 249 to 407 (FNLR…EEVE).

It belongs to the 7S seed storage protein family. Homotrimer.

Seed storage protein. This chain is Canavalin, found in Canavalia gladiata (Sword bean).